The chain runs to 605 residues: Indole-3-acetic acid-amido synthetase GH3.8 (605 aa).

AMP is bound by residues Ser115, Met342 to Ser346, Tyr365, Asp421, and Arg440.

The protein belongs to the IAA-amido conjugating enzyme family. Expressed in the inner floral organs (lodicules, stamens and carpels) and at lower levels in lemmas and paleas.

Catalyzes the synthesis of indole-3-acetic acid (IAA)-amino acid conjugates, providing a mechanism for the plant to cope with the presence of excessive free auxin. Produces more IAA-Asp levels than IAA-Ala levels in vitro. May participate in the activation of disease resistance by preventing the accumulation of free IAA, which reduces the expression of a group of auxin-responsive genes encoding expansins that control cell wall loosening and expansion. Contributes to late events in stamen and carpel differentiation, and influences floret fertility. This chain is Indole-3-acetic acid-amido synthetase GH3.8 (GH3.8), found in Oryza sativa subsp. indica (Rice).